Consider the following 305-residue polypeptide: Heme A synthase (305 aa).

The Cytoplasmic segment spans residues M1–K6. The chain crosses the membrane as a helical span at residues V7–T27. At K28 to R63 the chain is on the extracellular side. An intrachain disulfide couples C35 to C42. Residue E59 is part of the active site. H62 is a binding site for heme o. A helical transmembrane segment spans residues M64–M84. Residues K85 to P92 lie on the Cytoplasmic side of the membrane. A helical membrane pass occupies residues L93–V113. The Extracellular portion of the chain corresponds to W114–A122. The chain crosses the membrane as a helical span at residues L123–F143. H124 is a heme o binding site. Residues E144–L160 are Cytoplasmic-facing. A helical membrane pass occupies residues R161 to V181. At R182–Y212 the chain is on the extracellular side. Residues F213–F233 form a helical membrane-spanning segment. H214 contributes to the heme b binding site. At R234 to R240 the chain is on the cytoplasmic side. Residues V241 to A261 traverse the membrane as a helical segment. The Extracellular portion of the chain corresponds to L262–Y271. A helical transmembrane segment spans residues I272–L292. H276 lines the heme b pocket. Topologically, residues L293 to K305 are cytoplasmic.

Belongs to the COX15/CtaA family. Type 1 subfamily. As to quaternary structure, interacts with CtaB. The cofactor is heme b.

Its subcellular location is the cell membrane. The catalysed reaction is Fe(II)-heme o + 2 A + H2O = Fe(II)-heme a + 2 AH2. It participates in porphyrin-containing compound metabolism; heme A biosynthesis; heme A from heme O: step 1/1. In terms of biological role, catalyzes the conversion of heme O to heme A by two successive hydroxylations of the methyl group at C8. The first hydroxylation forms heme I, the second hydroxylation results in an unstable dihydroxymethyl group, which spontaneously dehydrates, resulting in the formyl group of heme A. The chain is Heme A synthase from Listeria monocytogenes serovar 1/2a (strain ATCC BAA-679 / EGD-e).